A 269-amino-acid polypeptide reads, in one-letter code: Protein CURLY FLAG LEAF 1 (269 aa).

The tract at residues 17-44 (SLNGGGGGGGGRRRGRRAAAAEGSDDSE) is disordered. An EAR motif is present at residues 47–52 (TVELNS). Positions 54–88 (VALPYHWEQCLDIRTGQVYYINWEDGTRTTIDPRS) constitute a WW domain. Disordered regions lie at residues 83-133 (TIDP…SGYT) and 174-218 (GDDE…SGAG). Composition is skewed to low complexity over residues 87–106 (RSSS…SSSR), 121–133 (AAAA…SGYT), and 180–202 (SSSS…AVSS). Over residues 203–212 (TLSSFSPTDE) the composition is skewed to polar residues.

In terms of assembly, binds to HDG1.

Functionally, negatively regulates the cuticle development probably by interacting with the HD-ZIP IV transcription factor HDG1. This chain is Protein CURLY FLAG LEAF 1, found in Oryza sativa subsp. indica (Rice).